Reading from the N-terminus, the 291-residue chain is ATP synthase gamma chain (291 aa).

Belongs to the ATPase gamma chain family. F-type ATPases have 2 components, CF(1) - the catalytic core - and CF(0) - the membrane proton channel. CF(1) has five subunits: alpha(3), beta(3), gamma(1), delta(1), epsilon(1). CF(0) has three main subunits: a, b and c.

Its subcellular location is the cell inner membrane. In terms of biological role, produces ATP from ADP in the presence of a proton gradient across the membrane. The gamma chain is believed to be important in regulating ATPase activity and the flow of protons through the CF(0) complex. In Variovorax paradoxus (strain S110), this protein is ATP synthase gamma chain.